Here is a 41-residue protein sequence, read N- to C-terminus: Photosystem II reaction center protein L (41 aa).

A helical membrane pass occupies residues 20-40; the sequence is SLYLGLLLVFVVGLLFSSYFL.

It belongs to the PsbL family. In terms of assembly, PSII is composed of 1 copy each of membrane proteins PsbA, PsbB, PsbC, PsbD, PsbE, PsbF, PsbH, PsbI, PsbJ, PsbK, PsbL, PsbM, PsbT, PsbX, PsbY, PsbZ, Psb30/Ycf12, peripheral proteins PsbO, CyanoQ (PsbQ), PsbU, PsbV and a large number of cofactors. It forms dimeric complexes.

The protein resides in the cellular thylakoid membrane. Functionally, one of the components of the core complex of photosystem II (PSII). PSII is a light-driven water:plastoquinone oxidoreductase that uses light energy to abstract electrons from H(2)O, generating O(2) and a proton gradient subsequently used for ATP formation. It consists of a core antenna complex that captures photons, and an electron transfer chain that converts photonic excitation into a charge separation. This subunit is found at the monomer-monomer interface and is required for correct PSII assembly and/or dimerization. This Synechococcus sp. (strain JA-3-3Ab) (Cyanobacteria bacterium Yellowstone A-Prime) protein is Photosystem II reaction center protein L.